The primary structure comprises 445 residues: Phosphoglucosamine mutase (445 aa).

The active-site Phosphoserine intermediate is the S102. Mg(2+) is bound by residues S102, D241, D243, and D245. Residue S102 is modified to Phosphoserine.

Belongs to the phosphohexose mutase family. Mg(2+) serves as cofactor. In terms of processing, activated by phosphorylation.

It carries out the reaction alpha-D-glucosamine 1-phosphate = D-glucosamine 6-phosphate. Catalyzes the conversion of glucosamine-6-phosphate to glucosamine-1-phosphate. In Shigella boydii serotype 4 (strain Sb227), this protein is Phosphoglucosamine mutase.